Here is a 241-residue protein sequence, read N- to C-terminus: tRNA (guanine-N(7)-)-methyltransferase (241 aa).

Residues Met-1 to Arg-20 are disordered. S-adenosyl-L-methionine contacts are provided by Glu-71, Glu-96, Asp-123, and Asp-146. Residue Asp-146 is part of the active site. Substrate is bound by residues Lys-150, Asp-182, and Thr-219 to Glu-222.

The protein belongs to the class I-like SAM-binding methyltransferase superfamily. TrmB family.

It catalyses the reaction guanosine(46) in tRNA + S-adenosyl-L-methionine = N(7)-methylguanosine(46) in tRNA + S-adenosyl-L-homocysteine. It participates in tRNA modification; N(7)-methylguanine-tRNA biosynthesis. Catalyzes the formation of N(7)-methylguanine at position 46 (m7G46) in tRNA. The polypeptide is tRNA (guanine-N(7)-)-methyltransferase (Pseudomonas fluorescens (strain ATCC BAA-477 / NRRL B-23932 / Pf-5)).